We begin with the raw amino-acid sequence, 277 residues long: Large ribosomal subunit protein uL2 (277 aa).

The segment at 199 to 277 (DHMNTSVGKA…ILISRHKRKK (79 aa)) is disordered. Residues 209 to 220 (GRTRWMGRRPHN) show a composition bias toward basic residues.

This sequence belongs to the universal ribosomal protein uL2 family. As to quaternary structure, part of the 50S ribosomal subunit. Forms a bridge to the 30S subunit in the 70S ribosome.

Its function is as follows. One of the primary rRNA binding proteins. Required for association of the 30S and 50S subunits to form the 70S ribosome, for tRNA binding and peptide bond formation. It has been suggested to have peptidyltransferase activity; this is somewhat controversial. Makes several contacts with the 16S rRNA in the 70S ribosome. The polypeptide is Large ribosomal subunit protein uL2 (Nitrobacter winogradskyi (strain ATCC 25391 / DSM 10237 / CIP 104748 / NCIMB 11846 / Nb-255)).